Consider the following 146-residue polypeptide: Snake venom vascular endothelial growth factor toxin (146 aa).

A signal peptide spans 1-24; the sequence is MAAYLLAVAILFCIQGWPLGTVQG. Glutamine 25 carries the pyrrolidone carboxylic acid modification. 3 disulfides stabilise this stretch: cysteine 38–cysteine 80, cysteine 69–cysteine 115, and cysteine 73–cysteine 117. The disordered stretch occupies residues 118 to 146; sequence RPRSASGVNSRKHKRNPEEGEQRAKFPFV. Positions 133-146 are enriched in basic and acidic residues; sequence NPEEGEQRAKFPFV.

Belongs to the PDGF/VEGF growth factor family. Snake venom VEGF subfamily. As to quaternary structure, homodimer; disulfide-linked. Interacts with VEGF receptor-1 (FLT1) with a high affinity, whereas it binds to VEGF receptor-2 (KDR) with a low affinity. Does not bind VEGF receptor-3 (FLT4). In terms of tissue distribution, expressed by the venom gland.

Its subcellular location is the secreted. Its function is as follows. Snake venom VEGFs that may contribute to venom dispersion and prey subjugation by inducing vascular permeability and hypotension. This protein induces an increase in capillary permeability after intradermal injection, as well as a drastic hypotensive effect after intravenous injection. The hypotension is mediated by nitric oxide (NO), which is produced by VEGF-activated endothelium NO synthase. Also induces angiogenesis in vitro. Like other crotalid VEGFs, this protein interacts with VEGF receptor-1 (FLT1) with a high affinity, whereas it binds to VEGF receptor-2 (KDR) with a low affinity. The polypeptide is Snake venom vascular endothelial growth factor toxin (Bothrops erythromelas (Caatinga lance head)).